Consider the following 444-residue polypeptide: Elongation factor 1-alpha (444 aa).

One can recognise a tr-type G domain in the interval 15–236; it reads KPHINLAVVG…VLDTFQPPPR (222 aa). The segment at 24–31 is G1; the sequence is GHVDNGKS. 24 to 31 serves as a coordination point for GTP; sequence GHVDNGKS. Residue serine 31 coordinates Mg(2+). The G2 stretch occupies residues 80–84; the sequence is GVTIE. The segment at 101–104 is G3; it reads DLPG. Residues 101 to 105 and 163 to 166 contribute to the GTP site; these read DLPGH and NKMD. The tract at residues 163–166 is G4; it reads NKMD. Residues 202–204 are G5; that stretch reads SAI.

This sequence belongs to the TRAFAC class translation factor GTPase superfamily. Classic translation factor GTPase family. EF-Tu/EF-1A subfamily.

Its subcellular location is the cytoplasm. It catalyses the reaction GTP + H2O = GDP + phosphate + H(+). GTP hydrolase that promotes the GTP-dependent binding of aminoacyl-tRNA to the A-site of ribosomes during protein biosynthesis. The protein is Elongation factor 1-alpha of Pyrobaculum calidifontis (strain DSM 21063 / JCM 11548 / VA1).